The chain runs to 686 residues: MPASSVRLPLRLLTLAGLLALAGAAALARGAPQGGPPSPQGGPAPTAAPARGPTLFVLVGDGSAWFVFQLGGLGALNDTRIRGHLLGRYLVSYQVVPPPVSAWYFVQRPRERPRLSGPPSGAELVAFDAPGVRRTYTTAAVWPAEVAVLADAEARCPAAVFNVTLGEAFLGLRVALRSFLPLEVIISAERMRMIAPPALGSDLEPPGPPAGRFHVYTLGFLSDGAMHQTMRDVAAYVHESDDYLAQLSAAHAAALAAVVQPGPYYFYRAAVRLGVAAFVFSEAARRDRRASAPALLRVESDARLLSRLLMRAAGCPAGFAGLFDGRAERVPVAPADQLRAAWTFGEDPAPRLDLARATVAEAYRRSVRGKPFDQQALFFAVALLLRAGGPGDARETLLRTTAMCTAERAAAAAELTRAALSPTAAWNEPFSLLDVLSPCAVSLRRDLGGDATLANLGAAARLALAPAGAPGAAAATDEGAEEEEEDPVARAAPEIPAEALLALPLRGGASFVFTRRRPDCGPAYTLGGVDIANPLVLAIVSNDSAACDYTDRMPESQHLPATDNPSVCVYCDCVFVRYSSAGTILETVLIESKDMEEQLMAGANSTIPSFNPTLHGGDVKALMLFPNGTVVDLLSFTSTRLAPVSPAYVVASVVGAAITVGILYALFKMLCSFSSEGYSRLINARS.

Positions Met-1 to Ala-24 are cleaved as a signal peptide. Over Ala-25–Pro-646 the chain is Virion surface. N-linked (GlcNAc...) asparagine; by host glycosylation is found at Asn-77, Asn-162, Asn-542, Asn-604, and Asn-627. The tract at residues Pro-157–Thr-217 is interaction with gL. A helical membrane pass occupies residues Ala-647–Phe-667. Topologically, residues Lys-668–Ser-686 are intravirion.

The protein belongs to the herpesviridae glycoprotein H family. As to quaternary structure, interacts with glycoprotein L (gL); this interaction is necessary for the correct processing and cell surface expression of gH. The heterodimer gH/gL seems to interact with gB trimers during fusion. N-glycosylated, O-glycosylated, and sialylated.

It is found in the virion membrane. It localises to the host cell membrane. The protein localises to the host endosome membrane. In terms of biological role, the heterodimer glycoprotein H-glycoprotein L is required for the fusion of viral and plasma membranes leading to virus entry into the host cell. Following initial binding to host receptor, membrane fusion is mediated by the fusion machinery composed of gB and the heterodimer gH/gL. May also be involved in the fusion between the virion envelope and the outer nuclear membrane during virion morphogenesis. The sequence is that of Envelope glycoprotein H from Sus scrofa (Pig).